The following is a 515-amino-acid chain: Probable malate:quinone oxidoreductase (515 aa).

This sequence belongs to the MQO family. The cofactor is FAD.

The catalysed reaction is (S)-malate + a quinone = a quinol + oxaloacetate. It functions in the pathway carbohydrate metabolism; tricarboxylic acid cycle; oxaloacetate from (S)-malate (quinone route): step 1/1. This Blochmanniella pennsylvanica (strain BPEN) protein is Probable malate:quinone oxidoreductase.